The primary structure comprises 580 residues: MSEDHTKADNLSEKDPHSPERSDSSSHEDAHAREEEESSDDDGALDGKPASLIAIVMIALSLAVFLSALDTTIVTVALPAISAHFNSTAAYTWVGSAYLLANAASTPIWGKLADIFGRKPMLLLANALFMIGSLVCALSINVGMLITARAIQGAAGGGLLTLVDTIIGDLFSLRTRGTYLGMIGGVWAIACALGPIVGGAFTSSVTWRWCFYINLPIDGLAFGIIFFFLKLKTPKTPILEGFAAIDWAGSFFIIGGTLMFLFGLQYGGITFPWDSATVICLLVFGVVCIVLFGLVEWKFARFPIIPLRLFQYRNNCGALLVAFFHSFVFISAFYYLPLYFQAVKGATPILAGVYILPAVLSTGVSAAATGAFIGNTGNYLIPMYFGMSMMILGYGLLINFDAGSGWAKLIIYQLIAGIGNGPNFQAPLVALQTKIKQSDIATGTATFNFVRNIATAISVVAGQVLYQNQLKKMTSTLQQLGPAASLIAAGDAGANTQAINALPTPQRDLARSAIADALSPMWIMYTAFAAAGLFCILLVSKTELTTTHEVTEVGLEAQKKAEAERKAERQAKDLEKAQKS.

Residues 1–34 (MSEDHTKADNLSEKDPHSPERSDSSSHEDAHARE) show a composition bias toward basic and acidic residues. Residues 1 to 45 (MSEDHTKADNLSEKDPHSPERSDSSSHEDAHAREEEESSDDDGAL) form a disordered region. N-linked (GlcNAc...) asparagine glycosylation occurs at asparagine 10. Residues 35–44 (EEESSDDDGA) show a composition bias toward acidic residues. Residues 49–69 (PASLIAIVMIALSLAVFLSAL) form a helical membrane-spanning segment. Asparagine 86 carries N-linked (GlcNAc...) asparagine glycosylation. 13 helical membrane-spanning segments follow: residues 89–109 (AAYT…TPIW), 127–147 (ALFM…MLIT), 153–173 (GAAG…LFSL), 181–201 (GMIG…GGAF), 209–229 (WCFY…FFFL), 242–262 (FAAI…MFLF), 275–295 (SATV…FGLV), 318–338 (ALLV…YLPL), 348–368 (PILA…SAAA), 380–400 (LIPM…LINF), 409–429 (LIIY…APLV), 444–466 (TATF…QVLY), and 519–539 (SPMW…ILLV). Residues 559-580 (KKAEAERKAERQAKDLEKAQKS) form a disordered region.

It belongs to the major facilitator superfamily. TCR/Tet family.

It is found in the cell membrane. It localises to the vacuole membrane. Its function is as follows. Efflux pump; part of the gene cluster that mediates the biosynthesis of dothistromin (DOTH), a polyketide toxin very similar in structure to the aflatoxin precursor, versicolorin B. One function of dotC may be to transport early-stage dothistromin biosynthetic intermediates from the cytoplasm into vacuoles, thereby affecting the rate of dothistromin production. The protein is Efflux pump dotC of Dothistroma septosporum (strain NZE10 / CBS 128990) (Red band needle blight fungus).